The primary structure comprises 83 residues: MRKGIHPDYQEVVFMDSATGAKFVAGSTLKPEETIEFEGKTYPLVRVEISSDSHPFYTGKQKFAQADGRIEKFNKKYGISSKN.

This sequence belongs to the bacterial ribosomal protein bL31 family. Type B subfamily. In terms of assembly, part of the 50S ribosomal subunit.

The chain is Large ribosomal subunit protein bL31B from Lactobacillus gasseri (strain ATCC 33323 / DSM 20243 / BCRC 14619 / CIP 102991 / JCM 1131 / KCTC 3163 / NCIMB 11718 / NCTC 13722 / AM63).